The following is a 47-amino-acid chain: Large ribosomal subunit protein bL33C (47 aa).

This sequence belongs to the bacterial ribosomal protein bL33 family.

The polypeptide is Large ribosomal subunit protein bL33C (Staphylococcus epidermidis (strain ATCC 35984 / DSM 28319 / BCRC 17069 / CCUG 31568 / BM 3577 / RP62A)).